A 319-amino-acid chain; its full sequence is Ciliary microtubule inner protein 2A (319 aa).

Belongs to the CIMIP2 family. In terms of assembly, microtubule inner protein component of sperm flagellar doublet microtubules.

The protein localises to the cytoplasm. Its subcellular location is the cytoskeleton. The protein resides in the flagellum axoneme. Its function is as follows. Microtubule inner protein (MIP) part of the dynein-decorated doublet microtubules (DMTs) in flagellum axoneme. Binds to the intra-tubulin interfaces. This Mus musculus (Mouse) protein is Ciliary microtubule inner protein 2A (Cimip2a).